Consider the following 270-residue polypeptide: Hydroxyethylthiazole kinase (270 aa).

M46 serves as a coordination point for substrate. Positions 120 and 166 each coordinate ATP. Residue G193 coordinates substrate.

This sequence belongs to the Thz kinase family. Mg(2+) serves as cofactor.

It catalyses the reaction 5-(2-hydroxyethyl)-4-methylthiazole + ATP = 4-methyl-5-(2-phosphooxyethyl)-thiazole + ADP + H(+). Its pathway is cofactor biosynthesis; thiamine diphosphate biosynthesis; 4-methyl-5-(2-phosphoethyl)-thiazole from 5-(2-hydroxyethyl)-4-methylthiazole: step 1/1. Functionally, catalyzes the phosphorylation of the hydroxyl group of 4-methyl-5-beta-hydroxyethylthiazole (THZ). The chain is Hydroxyethylthiazole kinase from Herpetosiphon aurantiacus (strain ATCC 23779 / DSM 785 / 114-95).